Here is a 140-residue protein sequence, read N- to C-terminus: TPT1-like protein (140 aa).

One can recognise a TCTP domain in the interval 6–140 (MITYWDLISH…LANFKNYQKT (135 aa)).

This sequence belongs to the TCTP family.

This is TPT1-like protein from Homo sapiens (Human).